The sequence spans 134 residues: Methylglyoxal synthase (134 aa).

The MGS-like domain maps to 1–134; that stretch reads MHIALIAHDE…DWRDLRRNDE (134 aa). Substrate is bound by residues H8, K12, 34-37, and 54-55; these read TGTT and SG. The Proton donor/acceptor role is filled by D60. Substrate is bound at residue H87.

The protein belongs to the methylglyoxal synthase family.

It catalyses the reaction dihydroxyacetone phosphate = methylglyoxal + phosphate. Its function is as follows. Catalyzes the formation of methylglyoxal from dihydroxyacetone phosphate. The protein is Methylglyoxal synthase of Listeria monocytogenes serotype 4b (strain CLIP80459).